Reading from the N-terminus, the 249-residue chain is Indole-3-glycerol phosphate synthase (249 aa).

It belongs to the TrpC family.

The enzyme catalyses 1-(2-carboxyphenylamino)-1-deoxy-D-ribulose 5-phosphate + H(+) = (1S,2R)-1-C-(indol-3-yl)glycerol 3-phosphate + CO2 + H2O. It participates in amino-acid biosynthesis; L-tryptophan biosynthesis; L-tryptophan from chorismate: step 4/5. In Pyrobaculum arsenaticum (strain DSM 13514 / JCM 11321 / PZ6), this protein is Indole-3-glycerol phosphate synthase.